Consider the following 136-residue polypeptide: Glutaredoxin-C7 (136 aa).

Positions 29-135 constitute a Glutaredoxin domain; that stretch reads LLRIESLASE…PLLKDAGALW (107 aa). A disulfide bridge links C49 with C52. A Responsive for interaction with TGA factors motif is present at residues 133-136; it reads ALWL.

This sequence belongs to the glutaredoxin family. CC-type subfamily. As to quaternary structure, interacts with TGA2, TGA3, TGA7 and PAN. Interacts with TGA9 and TGA10 in the nucleus. In terms of tissue distribution, highly expressed in inflorescences, roots, and siliques. Expressed at lower levels in mature flowers.

The protein localises to the cytoplasm. Its subcellular location is the nucleus. Its function is as follows. Has a glutathione-disulfide oxidoreductase activity in the presence of NADPH and glutathione reductase. Reduces low molecular weight disulfides and proteins. Involved in flower development as a regulator of petal primorida initiation and further petal morphogenesis. May mediate post-translational modifications of target proteins required for normal petal organ initiation and morphogenesis. ROXY1/TGA protein interactions can occur in vivo and support their biological relevance in petal development. May be involved in the regulation of the floral regulator class C gene AG (AGAMOUS). The protein is Glutaredoxin-C7 (GRXC7) of Arabidopsis thaliana (Mouse-ear cress).